Here is a 249-residue protein sequence, read N- to C-terminus: MNIYLIINHENQRIQNLIDKYHLKHDENSSMALIMNSNSLELYDRSKPRNKSIKVNFSSKKNNYRCLNFKKKNEILYKAIGIKKNYFPSVLDATAGLGQDSFLISFLGCYVIMMEYHPVIAALLTDGLERGYKDEKIGFWLKKRLHLIYDNSLNILNIPISQPDVIYLDPMYPINKKKSLPKKNMQFLRKLANKDDQSKNLLKVARKFAKKRVVVKRPSYANPISDEKVDFIISNKYHRFDIYLPFKKK.

Residue aspartate 169 participates in S-adenosyl-L-methionine binding.

The protein belongs to the methyltransferase superfamily. RsmJ family.

The protein localises to the cytoplasm. The enzyme catalyses guanosine(1516) in 16S rRNA + S-adenosyl-L-methionine = N(2)-methylguanosine(1516) in 16S rRNA + S-adenosyl-L-homocysteine + H(+). Functionally, specifically methylates the guanosine in position 1516 of 16S rRNA. This Buchnera aphidicola subsp. Schizaphis graminum (strain Sg) protein is Ribosomal RNA small subunit methyltransferase J.